We begin with the raw amino-acid sequence, 216 residues long: Refilin-A (216 aa).

The interval 1 to 83 is disordered; the sequence is MVGHLHLQGM…LPNPPASEMR (83 aa). Residues 12–22 are compositionally biased toward basic and acidic residues; sequence DSLKEQGREGL. Residues 29–39 are compositionally biased toward pro residues; that stretch reads GLPPSPSPSPP. The span at 57-71 shows a compositional bias: low complexity; it reads ASSEPPGPSEARAPP. Arg163 is modified (asymmetric dimethylarginine).

Belongs to the Refilin family. As to quaternary structure, interacts with FLNA and FLNB.

The protein resides in the cytoplasm. Its subcellular location is the cytoskeleton. Functionally, involved in the regulation of the perinuclear actin network and nuclear shape through interaction with filamins. Plays an essential role in actin cytoskeleton formation in developing cartilaginous cells. This Homo sapiens (Human) protein is Refilin-A.